The following is a 142-amino-acid chain: Large ribosomal subunit protein uL11 (142 aa).

The disordered stretch occupies residues 86-105 (LKSGSKEPGKQSAGQISRAK).

This sequence belongs to the universal ribosomal protein uL11 family. In terms of assembly, part of the ribosomal stalk of the 50S ribosomal subunit. Interacts with L10 and the large rRNA to form the base of the stalk. L10 forms an elongated spine to which L12 dimers bind in a sequential fashion forming a multimeric L10(L12)X complex. Post-translationally, one or more lysine residues are methylated.

In terms of biological role, forms part of the ribosomal stalk which helps the ribosome interact with GTP-bound translation factors. The sequence is that of Large ribosomal subunit protein uL11 from Chelativorans sp. (strain BNC1).